Consider the following 37-residue polypeptide: Large ribosomal subunit protein bL36c (37 aa).

This sequence belongs to the bacterial ribosomal protein bL36 family.

The protein localises to the plastid. Its subcellular location is the chloroplast. This chain is Large ribosomal subunit protein bL36c, found in Stigeoclonium helveticum (Green alga).